Here is a 2185-residue protein sequence, read N- to C-terminus: DNA polymerase epsilon catalytic subunit A (2185 aa).

The Zn(2+) site is built by cysteine 2072, cysteine 2075, cysteine 2094, and cysteine 2097. The segment at cysteine 2072–cysteine 2097 adopts a CysA-type zinc-finger fold. [4Fe-4S] cluster is bound by residues cysteine 2128, cysteine 2131, cysteine 2143, and cysteine 2145. Residues cysteine 2128–cysteine 2145 carry the CysB motif motif.

This sequence belongs to the DNA polymerase type-B family. Heterotetramer. Consists of 4 subunits: POL2, DPB2, DPB3 and DPB4. [4Fe-4S] cluster is required as a cofactor.

It localises to the nucleus. It catalyses the reaction DNA(n) + a 2'-deoxyribonucleoside 5'-triphosphate = DNA(n+1) + diphosphate. DNA polymerase II participates in chromosomal DNA replication. This chain is DNA polymerase epsilon catalytic subunit A (POL2), found in Kluyveromyces lactis (strain ATCC 8585 / CBS 2359 / DSM 70799 / NBRC 1267 / NRRL Y-1140 / WM37) (Yeast).